The sequence spans 246 residues: MVKPIIAPSILASDFANLGCECHRVINSGAEWLHIDVMDGHFVPNITLGQPIVTSLRRAVPRSQEEEKASGEVARPTAFFDCHMMVEEPEKWVADFAKAGADQFTFHYEATKDPLSLVKLIKENGIKAACAIKPGTPVDVLFELAPYLDMALVMTVEPGFGGQKFMPDMMPKVEALRTKFPHMNIQVDGGLGKETIGVAAKAGANVIVAGTSVFTASDPHEVISFMKEEVRKELKAKHILGDETKH.

Residue Ser-9 participates in substrate binding. 3 residues coordinate a divalent metal cation: His-34, Asp-36, and His-83. The active-site Proton acceptor is the Asp-36. Residues His-83, 159 to 162 (GFGG), 188 to 190 (DGG), and 210 to 212 (GTS) each bind substrate. Position 188 (Asp-188) interacts with a divalent metal cation. Asp-188 (proton donor) is an active-site residue.

The protein belongs to the ribulose-phosphate 3-epimerase family. Co(2+) is required as a cofactor. The cofactor is Fe(2+). Requires Mn(2+) as cofactor. It depends on Zn(2+) as a cofactor.

The enzyme catalyses D-ribulose 5-phosphate = D-xylulose 5-phosphate. Its pathway is carbohydrate degradation; pentose phosphate pathway; D-xylulose 5-phosphate from D-ribulose 5-phosphate (non-oxidative stage): step 1/1. Its function is as follows. Catalyzes the reversible epimerization of D-ribulose 5-phosphate to D-xylulose 5-phosphate. This is Ribulose-phosphate 3-epimerase (RPE1) from Candida glabrata (strain ATCC 2001 / BCRC 20586 / JCM 3761 / NBRC 0622 / NRRL Y-65 / CBS 138) (Yeast).